A 139-amino-acid chain; its full sequence is Ribulose bisphosphate carboxylase small subunit (139 aa).

Belongs to the RuBisCO small chain family. Heterohexadecamer of 8 large and 8 small subunits.

The protein resides in the plastid. Its subcellular location is the chloroplast. Functionally, ruBisCO catalyzes two reactions: the carboxylation of D-ribulose 1,5-bisphosphate, the primary event in carbon dioxide fixation, as well as the oxidative fragmentation of the pentose substrate in the photorespiration process. Both reactions occur simultaneously and in competition at the same active site. Although the small subunit is not catalytic it is essential for maximal activity. The polypeptide is Ribulose bisphosphate carboxylase small subunit (Olisthodiscus luteus (Marine phytoflagellate)).